A 91-amino-acid chain; its full sequence is Defensin-like protein 82 (91 aa).

Positions 1–27 are cleaved as a signal peptide; the sequence is MAIKKFSSLLLPLLMVLALVVLPIISG. 4 cysteine pairs are disulfide-bonded: cysteine 34–cysteine 72, cysteine 41–cysteine 62, cysteine 47–cysteine 70, and cysteine 51–cysteine 71.

The protein belongs to the DEFL family.

It localises to the secreted. The polypeptide is Defensin-like protein 82 (Arabidopsis thaliana (Mouse-ear cress)).